Consider the following 289-residue polypeptide: ATP synthase gamma chain (289 aa).

Belongs to the ATPase gamma chain family. F-type ATPases have 2 components, CF(1) - the catalytic core - and CF(0) - the membrane proton channel. CF(1) has five subunits: alpha(3), beta(3), gamma(1), delta(1), epsilon(1). CF(0) has three main subunits: a, b and c.

It localises to the cell inner membrane. In terms of biological role, produces ATP from ADP in the presence of a proton gradient across the membrane. The gamma chain is believed to be important in regulating ATPase activity and the flow of protons through the CF(0) complex. In Haemophilus influenzae (strain PittGG), this protein is ATP synthase gamma chain.